The sequence spans 495 residues: Probable cytosol aminopeptidase (495 aa).

The Mn(2+) site is built by Lys-261 and Asp-266. The active site involves Lys-273. Mn(2+) is bound by residues Asp-284, Asp-343, and Glu-345. The active site involves Arg-347.

Belongs to the peptidase M17 family. It depends on Mn(2+) as a cofactor.

Its subcellular location is the cytoplasm. It carries out the reaction Release of an N-terminal amino acid, Xaa-|-Yaa-, in which Xaa is preferably Leu, but may be other amino acids including Pro although not Arg or Lys, and Yaa may be Pro. Amino acid amides and methyl esters are also readily hydrolyzed, but rates on arylamides are exceedingly low.. The enzyme catalyses Release of an N-terminal amino acid, preferentially leucine, but not glutamic or aspartic acids.. In terms of biological role, presumably involved in the processing and regular turnover of intracellular proteins. Catalyzes the removal of unsubstituted N-terminal amino acids from various peptides. The sequence is that of Probable cytosol aminopeptidase from Chelativorans sp. (strain BNC1).